Here is a 631-residue protein sequence, read N- to C-terminus: Phosphomethylpyrimidine synthase (631 aa).

The segment at 54–80 (TLVGGDKDKPRYETNEPIPVYDTSGPY) is disordered. Residues 58–67 (GDKDKPRYET) show a composition bias toward basic and acidic residues. Substrate contacts are provided by residues asparagine 239, methionine 268, tyrosine 297, histidine 333, 353-355 (SRG), 394-397 (DGLR), and glutamate 433. Position 437 (histidine 437) interacts with Zn(2+). A substrate-binding site is contributed by tyrosine 460. Histidine 501 is a Zn(2+) binding site. Positions 581, 584, and 589 each coordinate [4Fe-4S] cluster.

Belongs to the ThiC family. In terms of assembly, homodimer. Requires [4Fe-4S] cluster as cofactor.

It carries out the reaction 5-amino-1-(5-phospho-beta-D-ribosyl)imidazole + S-adenosyl-L-methionine = 4-amino-2-methyl-5-(phosphooxymethyl)pyrimidine + CO + 5'-deoxyadenosine + formate + L-methionine + 3 H(+). Its pathway is cofactor biosynthesis; thiamine diphosphate biosynthesis. Its function is as follows. Catalyzes the synthesis of the hydroxymethylpyrimidine phosphate (HMP-P) moiety of thiamine from aminoimidazole ribotide (AIR) in a radical S-adenosyl-L-methionine (SAM)-dependent reaction. This chain is Phosphomethylpyrimidine synthase, found in Klebsiella pneumoniae subsp. pneumoniae (strain ATCC 700721 / MGH 78578).